Consider the following 329-residue polypeptide: MVKTQRVVITPGEPAGIGPDLVVQLAQREWPVELVVCADATLLTDRAAMLGLPLTLRPYSPNSPAQPQTAGTLTLLPVALRESVTAGQLAIENGHYVVETLARACDGCLNGEFAALITGPVHKGVINDAGIPFTGHTEFFEERSQAKKVVMMLATEELRVALATTHLPLRDIADAITPALLHEVIAILHHDLRTKFGIAEPRILVCGLNPHAGEGGHMGTEEIDTIIPVLDELRAQGMILNGPLPADTLFQPKYLDNADAVLAMYHDQGLPVLKYQGFGRGVNITLGLPFIRTSVDHGTALELAGRGEADVGSFITALNLAIKMIVNTQ.

Residues H136 and T137 each contribute to the substrate site. A divalent metal cation is bound by residues H166, H211, and H266. Residues K274, N283, and R292 each coordinate substrate.

This sequence belongs to the PdxA family. As to quaternary structure, homodimer. Requires Zn(2+) as cofactor. Mg(2+) is required as a cofactor. It depends on Co(2+) as a cofactor.

The protein resides in the cytoplasm. It carries out the reaction 4-(phosphooxy)-L-threonine + NAD(+) = 3-amino-2-oxopropyl phosphate + CO2 + NADH. The protein operates within cofactor biosynthesis; pyridoxine 5'-phosphate biosynthesis; pyridoxine 5'-phosphate from D-erythrose 4-phosphate: step 4/5. Functionally, catalyzes the NAD(P)-dependent oxidation of 4-(phosphooxy)-L-threonine (HTP) into 2-amino-3-oxo-4-(phosphooxy)butyric acid which spontaneously decarboxylates to form 3-amino-2-oxopropyl phosphate (AHAP). This Shigella boydii serotype 4 (strain Sb227) protein is 4-hydroxythreonine-4-phosphate dehydrogenase.